A 159-amino-acid polypeptide reads, in one-letter code: Putative 4-hydroxy-4-methyl-2-oxoglutarate aldolase (159 aa).

Substrate contacts are provided by residues 75-78 (GDQL) and R97. An a divalent metal cation-binding site is contributed by D98.

Belongs to the class II aldolase/RraA-like family. Homotrimer. A divalent metal cation serves as cofactor.

It catalyses the reaction 4-hydroxy-4-methyl-2-oxoglutarate = 2 pyruvate. It carries out the reaction oxaloacetate + H(+) = pyruvate + CO2. Its function is as follows. Catalyzes the aldol cleavage of 4-hydroxy-4-methyl-2-oxoglutarate (HMG) into 2 molecules of pyruvate. Also contains a secondary oxaloacetate (OAA) decarboxylase activity due to the common pyruvate enolate transition state formed following C-C bond cleavage in the retro-aldol and decarboxylation reactions. This Aromatoleum aromaticum (strain DSM 19018 / LMG 30748 / EbN1) (Azoarcus sp. (strain EbN1)) protein is Putative 4-hydroxy-4-methyl-2-oxoglutarate aldolase.